The chain runs to 317 residues: Olfactory receptor 2B11 (317 aa).

Over 1 to 29 (MKSDNHSFLGDSPKAFILLGVSDRPWLEL) the chain is Extracellular. Asparagine 5 is a glycosylation site (N-linked (GlcNAc...) asparagine). Residues 30–53 (PLFVVLLLSYVLAMLGNVAIILAS) traverse the membrane as a helical segment. Over 54–61 (RVDPQLHS) the chain is Cytoplasmic. The chain crosses the membrane as a helical span at residues 62–83 (PMYIFLSHLSFLDLCYTTTTVP). Over 84–104 (QMLVNMGSSQKTISYGGCTVQ) the chain is Extracellular. Residues cysteine 101 and cysteine 193 are joined by a disulfide bond. The chain crosses the membrane as a helical span at residues 105-124 (YAVFHWLGCTECIVLAAMAL). The Cytoplasmic segment spans residues 125–143 (DRYVAICKPLHYAVLMHRA). The helical transmembrane segment at 144-162 (LCQQLVALAWLSGFGNSFV) threads the bilayer. Residues 163-199 (QVVLTVQLPFCGRQVLNNFFCEVPAVIKLSCADTAVN) lie on the Extracellular side of the membrane. Asparagine 199 is a glycosylation site (N-linked (GlcNAc...) asparagine). The chain crosses the membrane as a helical span at residues 200–223 (DTILAVLVAFFVLVPLALILLSYG). Over 224–240 (FIARAVLRIQSSKGRHK) the chain is Cytoplasmic. The chain crosses the membrane as a helical span at residues 241–263 (AFGTCSSHLMIVSLFYLPAIYMY). The Extracellular segment spans residues 264–276 (LQPPSSYSQEQGK). A helical transmembrane segment spans residues 277–296 (FISLFYSIITPTLNPFTYTL). The Cytoplasmic segment spans residues 297 to 317 (RNKDMKGALRRLLARIWRLCG).

Belongs to the G-protein coupled receptor 1 family.

The protein resides in the cell membrane. Its function is as follows. Odorant receptor. The chain is Olfactory receptor 2B11 (OR2B11) from Homo sapiens (Human).